The following is a 406-amino-acid chain: COP9 signalosome complex subunit 4 (406 aa).

In terms of domain architecture, PCI spans Tyr197–Pro366.

The protein belongs to the CSN4 family. Component of the CSN complex, probably composed of cops1, cops2, cops3, cops4, cops5, cops6, cops7, cops8 and cops9.

Its subcellular location is the cytoplasm. It is found in the nucleus. It localises to the cytoplasmic vesicle. The protein localises to the secretory vesicle. The protein resides in the synaptic vesicle. In terms of biological role, component of the COP9 signalosome complex (CSN), a complex involved in various cellular and developmental processes. The CSN complex is an essential regulator of the ubiquitin (Ubl) conjugation pathway by mediating the deneddylation of the cullin subunits of E3 ligase complexes, leading to modify the Ubl ligase activity. The protein is COP9 signalosome complex subunit 4 (cops4) of Danio rerio (Zebrafish).